The chain runs to 102 residues: Large ribosomal subunit protein bL21 (102 aa).

This sequence belongs to the bacterial ribosomal protein bL21 family. In terms of assembly, part of the 50S ribosomal subunit. Contacts protein L20.

This protein binds to 23S rRNA in the presence of protein L20. This chain is Large ribosomal subunit protein bL21, found in Myxococcus xanthus (strain DK1622).